Here is a 334-residue protein sequence, read N- to C-terminus: Dual specificity mitogen-activated protein kinase kinase 6 (334 aa).

Positions 1-11 (MSQSKGKKRNP) are enriched in basic residues. The tract at residues 1–34 (MSQSKGKKRNPGLKIPKEAFEQPQTSSTPPRDLD) is disordered. Residues 4–19 (SKGKKRNPGLKIPKEA) are d domain. Residues 53–314 (LEPIVELGRG…YPELMQHPFF (262 aa)) enclose the Protein kinase domain. ATP contacts are provided by residues 59-67 (LGRGAYGVV) and Lys-82. Asp-179 (proton acceptor) is an active-site residue. Ser-207 bears the Phosphoserine; by MAPK3 mark. Residue Thr-211 is modified to Phosphothreonine; by MAPK3. Residues 311-334 (HPFFTVHESKAADVASFVKLILGD) are DVD domain.

Belongs to the protein kinase superfamily. STE Ser/Thr protein kinase family. MAP kinase kinase subfamily. Dimer. Interacts (via its D domain) with its substrates MAPK11, MAPK12, MAPK13 and MAPK14. Interacts (via its DVD domain) with MAP3Ks activators like MAP3K5/ASK1, MAP3K1/MEKK1, MAP3K2/MEKK2, MAP3K3/MEKK3, MAP3K4/MEKK4, MAP3K7/TAK1, MAP3K11/MLK3 and MAP3K17/TAOK2. Interacts with DCTN1. Interacts with EIF2AK2/PKR. Weakly autophosphorylated. Phosphorylated at Ser-207 and Thr-211 by the majority of M3Ks, such as MAP3K5/ASK1, MAP3K1/MEKK1, MAP3K2/MEKK2, MAP3K3/MEKK3, MAP3K4/MEKK4, MAP3K7/TAK1, MAP3K11/MLK3 and MAP3K17/TAOK2. In terms of processing, in response to genotoxic stress, MAP3K-phosphorylated MAP2K6 is ubiquitinated and degraded by the SCF(FBXO31) complex.

It localises to the nucleus. Its subcellular location is the cytoplasm. It is found in the cytoskeleton. It carries out the reaction L-seryl-[protein] + ATP = O-phospho-L-seryl-[protein] + ADP + H(+). The catalysed reaction is L-threonyl-[protein] + ATP = O-phospho-L-threonyl-[protein] + ADP + H(+). It catalyses the reaction L-tyrosyl-[protein] + ATP = O-phospho-L-tyrosyl-[protein] + ADP + H(+). With respect to regulation, activated by dual phosphorylation on Ser-207 and Thr-211 in response to a variety of cellular stresses, including UV radiation, osmotic shock, hypoxia, inflammatory cytokines, interferon gamma (IFNG), and less often by growth factors. MAP2K6/MKK6 is activated by the majority of M3Ks, such as MAP3K5/ASK1, MAP3K1/MEKK1, MAP3K2/MEKK2, MAP3K3/MEKK3, MAP3K4/MEKK4, MAP3K7/TAK1, MAP3K11/MLK3 and MAP3K17/TAOK2. Functionally, dual specificity protein kinase which acts as an essential component of the MAP kinase signal transduction pathway. With MAP3K3/MKK3, catalyzes the concomitant phosphorylation of a threonine and a tyrosine residue in the MAP kinases p38 MAPK11, MAPK12, MAPK13 and MAPK14 and plays an important role in the regulation of cellular responses to cytokines and all kinds of stresses. Especially, MAP2K3/MKK3 and MAP2K6/MKK6 are both essential for the activation of MAPK11 and MAPK13 induced by environmental stress, whereas MAP2K6/MKK6 is the major MAPK11 activator in response to TNF. MAP2K6/MKK6 also phosphorylates and activates PAK6. The p38 MAP kinase signal transduction pathway leads to direct activation of transcription factors. Nuclear targets of p38 MAP kinase include the transcription factors ATF2 and ELK1. Within the p38 MAPK signal transduction pathway, MAP3K6/MKK6 mediates phosphorylation of STAT4 through MAPK14 activation, and is therefore required for STAT4 activation and STAT4-regulated gene expression in response to IL-12 stimulation. The pathway is also crucial for IL-6-induced SOCS3 expression and down-regulation of IL-6-mediated gene induction; and for IFNG-dependent gene transcription. Has a role in osteoclast differentiation through NF-kappa-B transactivation by TNFSF11, and in endochondral ossification and since SOX9 is another likely downstream target of the p38 MAPK pathway. MAP2K6/MKK6 mediates apoptotic cell death in thymocytes. Acts also as a regulator for melanocytes dendricity, through the modulation of Rho family GTPases. In Mus musculus (Mouse), this protein is Dual specificity mitogen-activated protein kinase kinase 6 (Map2k6).